Reading from the N-terminus, the 176-residue chain is Putative metal-dependent hydrolase BLi00869/BLi00870/BL03027 (176 aa).

Zn(2+) contacts are provided by His65, His158, and His162.

This sequence belongs to the metal hydrolase YfiT family. As to quaternary structure, homodimer. It depends on Zn(2+) as a cofactor.

The protein resides in the cytoplasm. Functionally, possible metal-dependent hydrolase. The protein is Putative metal-dependent hydrolase BLi00869/BLi00870/BL03027 of Bacillus licheniformis (strain ATCC 14580 / DSM 13 / JCM 2505 / CCUG 7422 / NBRC 12200 / NCIMB 9375 / NCTC 10341 / NRRL NRS-1264 / Gibson 46).